Consider the following 109-residue polypeptide: ATP-dependent Clp protease adapter protein ClpS (109 aa).

It belongs to the ClpS family. In terms of assembly, binds to the N-terminal domain of the chaperone ClpA.

Involved in the modulation of the specificity of the ClpAP-mediated ATP-dependent protein degradation. This chain is ATP-dependent Clp protease adapter protein ClpS, found in Lawsonia intracellularis (strain PHE/MN1-00).